A 261-amino-acid chain; its full sequence is 5'-nucleotidase SurE (261 aa).

The a divalent metal cation site is built by aspartate 8, aspartate 9, serine 40, and asparagine 94.

Belongs to the SurE nucleotidase family. A divalent metal cation serves as cofactor.

It localises to the cytoplasm. It catalyses the reaction a ribonucleoside 5'-phosphate + H2O = a ribonucleoside + phosphate. In terms of biological role, nucleotidase that shows phosphatase activity on nucleoside 5'-monophosphates. This is 5'-nucleotidase SurE from Anaplasma marginale (strain St. Maries).